Consider the following 117-residue polypeptide: Ribosome-binding factor A (117 aa).

It belongs to the RbfA family. In terms of assembly, monomer. Binds 30S ribosomal subunits, but not 50S ribosomal subunits or 70S ribosomes.

It is found in the cytoplasm. Functionally, one of several proteins that assist in the late maturation steps of the functional core of the 30S ribosomal subunit. Associates with free 30S ribosomal subunits (but not with 30S subunits that are part of 70S ribosomes or polysomes). Required for efficient processing of 16S rRNA. May interact with the 5'-terminal helix region of 16S rRNA. This Blochmanniella floridana protein is Ribosome-binding factor A.